Consider the following 163-residue polypeptide: Protein EARLY RESPONSIVE TO DEHYDRATION 15 (163 aa).

The PAM2-like motif lies at 10 to 20 (TLNPDAPLFIP). Residues 118–163 (NGEMVKKSSGNRSPRSIVEPAKYAEKPAKWGNQRVAAAPRNIHQPR) form a disordered region.

As to quaternary structure, interacts with PAB2, PAB4 and PAB8. Interacts with MPC. As to expression, expressed in cauline leaves, stems, rosette leaves, immature siliques and primary inflorescences.

The protein resides in the cytoplasm. Central component of stress responses that interacts with poly(A)-binding proteins. Negative regulator of abscisic acid (ABA) responses, including resistance to drought and freezing as well as stomatal closure regulation. Mediates resistance to the bacterial necrotroph pathogen Erwinia carotovora subsp. carotovora and promotes the induction of marker genes for systemic acquired resistance (SAR). This Arabidopsis thaliana (Mouse-ear cress) protein is Protein EARLY RESPONSIVE TO DEHYDRATION 15 (ERD15).